We begin with the raw amino-acid sequence, 369 residues long: MKRHYEAVVIGGGIIGSAIAYYLAKENKNTALFESGTMGGRTTSAAAGMLGAHAECEERDAFFDFAMHSQRLYKGLGEELYALSGVDIRQHNGGMFKLAFSEEDVLQLRQMDDLDSVSWYSKEEVLEKEPYASGDIFGASFIQDDVHVEPYFVCKAYVKAAKMLGAEIFEHTPVLHVERDGEALFIKTPSGDVWANHVVVASGVWSGMFFKQLGLNNAFLPVKGECLSVWNDDIPLTKTLYHDHCYIVPRKSGRLVVGATMKPGDWSETPDLGGLESVMKKAKTMLPAIQNMKVDRFWAGLRPGTKDGKPYIGRHPEDSRILFAAGHFRNGILLAPATGALISDLIMNKEVNQDWLHAFRIDRKEAVQI.

Residues 14-15 (II), 34-35 (ES), 42-43 (TT), 47-49 (AGM), and valine 174 each bind FAD. Residues arginine 302 and arginine 329 each coordinate substrate. Position 327-333 (327-333 (HFRNGIL)) interacts with FAD.

This sequence belongs to the DAO family. ThiO subfamily. As to quaternary structure, homotetramer. FAD serves as cofactor.

It localises to the cytoplasm. The catalysed reaction is glycine + O2 + H2O = glyoxylate + H2O2 + NH4(+). The enzyme catalyses N-ethylglycine + O2 + H2O = ethylamine + glyoxylate + H2O2. It catalyses the reaction sarcosine + O2 + H2O = methylamine + glyoxylate + H2O2. It carries out the reaction D-alanine + O2 + H2O = pyruvate + H2O2 + NH4(+). The catalysed reaction is glyphosate + O2 + H2O = aminomethylphosphonate + glyoxylate + H2O2 + H(+). It functions in the pathway cofactor biosynthesis; thiamine diphosphate biosynthesis. Is competitively inhibited by glycolate. Its function is as follows. Catalyzes the FAD-dependent oxidative deamination of various amines and D-amino acids to yield the corresponding alpha-keto acids, ammonia/amine, and hydrogen peroxide. Oxidizes sarcosine (N-methylglycine), N-ethylglycine and glycine. Can also oxidize the herbicide glyphosate (N-phosphonomethylglycine). Displays lower activities on D-alanine, D-valine, D-proline and D-methionine. Does not act on L-amino acids and other D-amino acids. Is essential for thiamine biosynthesis since the oxidation of glycine catalyzed by ThiO generates the glycine imine intermediate (dehydroglycine) required for the biosynthesis of the thiazole ring of thiamine pyrophosphate. The polypeptide is Glycine oxidase (Bacillus subtilis (strain 168)).